The primary structure comprises 290 residues: 4-diphosphocytidyl-2-C-methyl-D-erythritol kinase (290 aa).

The active site involves K14. Residue 103–113 (PMGGGLGGGSS) participates in ATP binding. The active site involves D145.

It belongs to the GHMP kinase family. IspE subfamily. Homodimer.

It carries out the reaction 4-CDP-2-C-methyl-D-erythritol + ATP = 4-CDP-2-C-methyl-D-erythritol 2-phosphate + ADP + H(+). Its pathway is isoprenoid biosynthesis; isopentenyl diphosphate biosynthesis via DXP pathway; isopentenyl diphosphate from 1-deoxy-D-xylulose 5-phosphate: step 3/6. In terms of biological role, catalyzes the phosphorylation of the position 2 hydroxy group of 4-diphosphocytidyl-2C-methyl-D-erythritol. The chain is 4-diphosphocytidyl-2-C-methyl-D-erythritol kinase from Pectobacterium atrosepticum (strain SCRI 1043 / ATCC BAA-672) (Erwinia carotovora subsp. atroseptica).